The following is a 120-amino-acid chain: Ribonuclease P protein component (120 aa).

The protein belongs to the RnpA family. As to quaternary structure, consists of a catalytic RNA component (M1 or rnpB) and a protein subunit.

The catalysed reaction is Endonucleolytic cleavage of RNA, removing 5'-extranucleotides from tRNA precursor.. Functionally, RNaseP catalyzes the removal of the 5'-leader sequence from pre-tRNA to produce the mature 5'-terminus. It can also cleave other RNA substrates such as 4.5S RNA. The protein component plays an auxiliary but essential role in vivo by binding to the 5'-leader sequence and broadening the substrate specificity of the ribozyme. This chain is Ribonuclease P protein component, found in Dictyoglomus thermophilum (strain ATCC 35947 / DSM 3960 / H-6-12).